A 284-amino-acid chain; its full sequence is Expansin-A17 (284 aa).

A signal peptide spans 1-21 (MASSWNNPAIFLAAALAVATA). The Expansin-like EG45 domain maps to 71–185 (GGACGYVSND…RRVPCQRTGG (115 aa)). The 85-residue stretch at 195–279 (YWLLLYVMNV…WWITGLCYQG (85 aa)) folds into the Expansin-like CBD domain.

The protein belongs to the expansin family. Expansin A subfamily. As to expression, expressed in roots.

It localises to the secreted. Its subcellular location is the cell wall. The protein resides in the membrane. Functionally, may cause loosening and extension of plant cell walls by disrupting non-covalent bonding between cellulose microfibrils and matrix glucans. No enzymatic activity has been found. May be required for rapid internodal elongation in deepwater rice during submergence. The protein is Expansin-A17 (EXPA17) of Oryza sativa subsp. japonica (Rice).